The following is a 457-amino-acid chain: Argininosuccinate lyase (457 aa).

It belongs to the lyase 1 family. Argininosuccinate lyase subfamily.

Its subcellular location is the cytoplasm. It carries out the reaction 2-(N(omega)-L-arginino)succinate = fumarate + L-arginine. The protein operates within amino-acid biosynthesis; L-arginine biosynthesis; L-arginine from L-ornithine and carbamoyl phosphate: step 3/3. The protein is Argininosuccinate lyase of Shigella sonnei (strain Ss046).